The following is a 563-amino-acid chain: (R)-mandelonitrile lyase 1 (563 aa).

Residues 1-27 form the signal peptide; that stretch reads MEKSTMSAILLVLHLFVLLLQYSEVHS. FAD-binding positions include 63–64, 82–83, Val129, Thr133, and 137–140; these read TS, ER, and NAGV. N-linked (GlcNAc...) asparagine glycosylation is found at Asn145 and Asn162. An FAD-binding site is contributed by Val244. Cys355 provides a ligand contact to substrate. Residue Asn379 is glycosylated (N-linked (GlcNAc...) asparagine). Cys426 and Cys477 are joined by a disulfide. Tyr484 lines the substrate pocket. FAD is bound by residues 485 to 486 and Gly514; that span reads WH. His486 acts as the Proton donor in catalysis. Residue His524 is the Proton acceptor of the active site. Residue 525–526 coordinates FAD; it reads PQ.

Belongs to the GMC oxidoreductase family. As to quaternary structure, monomer. It depends on FAD as a cofactor. Post-translationally, glycosylated. Seeds. Localized within cotyledonary parenchyma cells.

It is found in the vacuole. Its subcellular location is the aleurone grain. It carries out the reaction (R)-mandelonitrile = benzaldehyde + hydrogen cyanide. Functionally, involved in cyanogenesis, the release of HCN from injured tissues. Catalyzes the stereospecific addition of HCN to a variety of aldehydes in vitro. It is a major seed constituent, and could have the additional role of a storage form for reduced nitrogen. This chain is (R)-mandelonitrile lyase 1 (MDL1), found in Prunus serotina (Black cherry).